The sequence spans 1174 residues: MSSNNDLWLHLVSQLNTQQRAAALFDYTRGLQVIAGPGTGKTKVLTSRVAYLILHHHIHPRDIIVTTFTNKAANEMKERLQEMLRGAGVNISELLIGTFHSICLKILYRFGHLVDLQKDWRIIDEKEIDVILDDMIEKVPDQIRDYASSITRKVNLCMPSKNGDEWTIHPKLIKKQISKLKSNAILPEEYILDSNHDAALGYFYQIYQSELSKKNTLDFDDLLMYTFRLLTRVRVLSNIKHVLVDEFQDTNGIQLDLMFLFAKGNHHLSRGMTIVGDPDQSIYAFRNALAHNFLEMGRKCPIEYSTIILVENYRSSQKILNTSEILITQQNKGRQNRAPLRAQFDLDFPPVYMNFPAYFLEAPSLVRELLYLKALPNLFTFNDFAILVRQRRQIKRIESALIEHRIPYKIIRGHSFWDSKETRAMLNLLKLIFSPNDKHAILASLLYPARGLGPATGEKIKNALDTLATDVSCFQILKDISSKKIMLDIPTKGRSVIADFISMIENCQLLLQSTLLGGLSDLFDKLYELSGLKYEYLYKDGKKKNDQLEKSEPNLLNARHKNIELLKNYFLALLSKSESSDKEKNEAIKAATDEAEPIENKVITPKEYLRNFFNSLSLHSDAAEEEESESNKDAKIKREKNGFVTISTIHGAKGLEWPVVFIPGCEEGIIPCVFNDDKKDESEEDEEEDQENSKKDASPKKTRVLSVEDSIDEERRMFFVAQTRAKYLLYLSNTVTVEDVDRPRIASRFLTTDLIKAMSDSQKLFESTNSIKKLYRILNKKPPAEDDKLFSLDQLRKDYNQFIENRRERMIWQGIQMNDVYGIQLSRNKLLGSVSDFTSAADQLRLETQNSIFPQKKLIEKSRPSKINGNYAPKSRVKSPEKRYAPETTSFHSPTKKKVYAPQYVSTTNVPSRQEFHSSTGKNIPFLRREDRSITDISPRSSTRSLKGASPNKTSHMSDDLMRPSPTRKDKVTRNIHFATAGTFRIETQSNVDELHPPEYSNKSGQSLTSSEFSGFSSACSNSDQPTNLIEDINNELDLSDEELLNDISIERRRELLGSKKTKKIKPKTRNRKSKRGDKVKVEEVIDLKSEFEEDDSRNTTAAELLHNPDDTTVDNRPIISNAKFLADAAMKKTQKFSKKVKNEPASSQMDIFSQLSRAKKKSKLNNGEIIVID.

The region spanning 14-316 is the UvrD-like helicase ATP-binding domain; sequence QLNTQQRAAA…IILVENYRSS (303 aa). Residue 38–43 coordinates ATP; the sequence is GTGKTK. The interval 222–243 is leucine-zipper; it reads LLMYTFRLLTRVRVLSNIKHVL. Arg-314 provides a ligand contact to ATP. In terms of domain architecture, UvrD-like helicase C-terminal spans 317 to 654; the sequence is QKILNTSEIL…TISTIHGAKG (338 aa). The interval 676-704 is disordered; the sequence is DDKKDESEEDEEEDQENSKKDASPKKTRV. Position 833 is a phosphoserine (Ser-833). Disordered stretches follow at residues 865-896, 909-973, and 994-1024; these read SKIN…SPTK, NVPS…DKVT, and ELHP…SNSD. 2 stretches are compositionally biased toward polar residues: residues 909 to 922 and 935 to 955; these read NVPS…STGK and TDIS…NKTS. A compositionally biased stretch (basic and acidic residues) spans 956–973; sequence HMSDDLMRPSPTRKDKVT. Low complexity predominate over residues 1007–1023; the sequence is SLTSSEFSGFSSACSNS.

It belongs to the helicase family. UvrD subfamily.

Its subcellular location is the nucleus. It catalyses the reaction Couples ATP hydrolysis with the unwinding of duplex DNA by translocating in the 3'-5' direction.. It carries out the reaction ATP + H2O = ADP + phosphate + H(+). ATP-dependent DNA helicase involved in DNA repair at least for UV-induced lesions. The polarity of the helicase activity was determined to be 3' to 5'. This chain is ATP-dependent DNA helicase SRS2 (SRS2), found in Saccharomyces cerevisiae (strain ATCC 204508 / S288c) (Baker's yeast).